The sequence spans 461 residues: MSHPQSHRYFSVNAPAGGERHLALDEKGVLCLTVVDPATRKLLIPLSCVYPTQAQQRTTIPSLCQLFLNGRCRQGTQCHQVHAALDVVAALRSQVDYLPICCALHGDRDYVNALDNRSWMSRVVVHVPDATYGGGYIPLARFSYTTPISRILREVNARLESGVSVAAVDGGGHPKRMVLNACDFKICGLHTLDRCRYAEECIFLHICKEIVVDVNNGSGDYSLTSQARDGGEPGPRGAKKGSVFVSVSRQQRVRGRPLSYPTVEYQTPFPLRSYEGSMSYNAVSDINSDCSWVSGRYPTGAYMESRMDAAPLPSLAPRFVQGHPGVPRCYSSTTTSTTTTAAAREDAAMYGAGGCWDRWSSPESGCAPCAFVGSCSDCHYADNNNYSGCNGYAYGSRNGYGSDGPNCYFCPGDECSSTHLCPNGTSSSVPQPVESVSSASVSARAWQHNPYGVTPTGGISD.

2 consecutive C3H1-type zinc fingers follow at residues 63–85 (LCQL…HAAL) and 181–208 (ACDF…HICK). Residues 224 to 243 (TSQARDGGEPGPRGAKKGSV) are disordered. Positions 446-451 (WQHNPY) match the MKT1-binding motif motif.

Its function is as follows. RNA-binding protein involved in regulation of mRNA stability. Promotes mRNA stabilization by recruiting MKT1 and PBP1. Stabilizes transcripts encoding mitochondrial proteins. The chain is RNA-binding protein ZCH321 from Trypanosoma brucei brucei (strain 927/4 GUTat10.1).